The following is a 250-amino-acid chain: 5'-nucleotidase SurE (250 aa).

A divalent metal cation-binding residues include D8, D9, S39, and N91.

The protein belongs to the SurE nucleotidase family. The cofactor is a divalent metal cation.

Its subcellular location is the cytoplasm. It carries out the reaction a ribonucleoside 5'-phosphate + H2O = a ribonucleoside + phosphate. Nucleotidase that shows phosphatase activity on nucleoside 5'-monophosphates. This chain is 5'-nucleotidase SurE, found in Syntrophotalea carbinolica (strain DSM 2380 / NBRC 103641 / GraBd1) (Pelobacter carbinolicus).